The chain runs to 982 residues: MAPAVLQKPGVIKDPSIAALFSNKDPEQRYQDLREIGHGSFGAVYFAYDKKNEQTVAIKKMNFSGKQAVEKWNDILKEVSFLNTVVHPHIVDYKACFLKDTTCWLVMEYCIGSAADIVDVLRKGMREVEIAAICSQTLDALRYLHSLKRIHRDIKAGNILLSDHAIVKLADFGSASLVDPAQTFIGTPFFMAPEVILAMDEGHYTDRADIWSLGITCIELAERRPPLFSMNAMSALYHIAQNDPPTLSPIDTSEQPEWSLEFVQFIDKCLRKPAEERMSAEECFRHPFIQRSRPSDTIQELIQRTKNMVLELDNFQYKKMRKLMYLDETEGKEGSEGNGASDDLDFHGNEANSIGRAGDSASSRSASLTSFRSMQSSGGAGLLVSTNTTGAMDNVHGSSGYGNGSSSTTSSARRRPPIPSQMLSSTSTSGVGTMPSHGSVGASITAIAVNPTPSPSEPIPTSQPTSKSESSSILETAHDDPLDTSIRAPVKDLHMPHRAVKERIATLQNHKFATLRSQRIINQEQEEYTKENNMYEQMSKYKHLRQAHHKELQQFEERCALDREQLRVKMDRELEQLTTTYSKEKMRVRCSQNNELDKRKKDIEDGEKKMKKTKNSQNQQQMKLYSAQQLKEYKYNKEAQKTRLRSLNMPRSTYENAMKEVKADLNRVKDARENDFDEKLRAELEDEIVRYRRQQLSNLHQLEEQLDDEDVNVQERQMDTRHGLLSKQHEMTRDLEIQHLNELHAMKKRHLETQHEAESASQNEYTQRQQDELRKKHAMQSRQQPRDLKIQEAQIRKQYRQVVKTQTRQFKLYLTQMVQVVPKDEQKELTSRLKQDQMQKVALLASQYESQIKKMVQDKTVKLESWQEDEQRVLSEKLEKELEELIAYQKKTRATLEEQIKKERTALEERIGTRRAMLEQKIIEEREQMGEMRRLKKEQIRDRHSQERHRLENHFVRTGSTSRSSGGIAPGVGNSSSIQMAM.

Residues 30–289 enclose the Protein kinase domain; that stretch reads YQDLREIGHG…AEECFRHPFI (260 aa). Residues 36–44 and K59 each bind ATP; that span reads IGHGSFGAV. The active-site Proton acceptor is the D153. Disordered stretches follow at residues 331 to 484, 592 to 620, 751 to 789, and 957 to 982; these read GKEG…PLDT, QNNELDKRKKDIEDGEKKMKKTKNSQNQQ, LETQHEAESASQNEYTQRQQDELRKKHAMQSRQQPRDLK, and RTGSTSRSSGGIAPGVGNSSSIQMAM. The segment covering 353-373 has biased composition (low complexity); it reads SIGRAGDSASSRSASLTSFRS. A compositionally biased stretch (polar residues) spans 421-431; the sequence is QMLSSTSTSGV. The span at 459 to 472 shows a compositional bias: low complexity; that stretch reads IPTSQPTSKSESSS. Residues 595–608 show a composition bias toward basic and acidic residues; sequence ELDKRKKDIEDGEK. Residues 759-768 are compositionally biased toward polar residues; sequence SASQNEYTQR. Low complexity predominate over residues 957 to 967; the sequence is RTGSTSRSSGG. Residues 973–982 show a composition bias toward polar residues; the sequence is GNSSSIQMAM.

This sequence belongs to the protein kinase superfamily. Ser/Thr protein kinase family. STE20 subfamily. Mg(2+) serves as cofactor. In terms of tissue distribution, expressed in the pharynx, including the pharyngeal muscle of the metacorpus, the isthmus, and the terminal bulb; in the intestine, including the pharyngeointestinal valve between the pharynx and the intestine, a structure near the anus likely to be the anal sphincter and the excretory cell and in several ring neurons.

Its subcellular location is the cytoplasm. The protein localises to the cytoskeleton. It localises to the cell cortex. The enzyme catalyses L-seryl-[protein] + ATP = O-phospho-L-seryl-[protein] + ADP + H(+). The catalysed reaction is L-threonyl-[protein] + ATP = O-phospho-L-threonyl-[protein] + ADP + H(+). Acts as a negative regulator of cortical contractions during early embryonic cell division, possibly by regulating rho-1-dependent actomyosin contractility. Plays a role in polarity establishment in early embryos by regulating the size of the anterior and posterior cortex in the first asymmetric cell division. Might play a role in cell cycle progression. In the germline, involved in the regulation of meiotic progression during oogenesis, possibly by modulating the timing of mpk-1 activation. Plays a role in meiotic recombination events. Involved in pharyngeal pumping. In Caenorhabditis elegans, this protein is Serine/threonine-protein kinase SULU (kin-18).